The sequence spans 1049 residues: RIMS-binding protein 2 (1049 aa).

Residues 164–231 (GKVHLCVARY…PSNFVDFIQD (68 aa)) form the SH3 1 domain. Fibronectin type-III domains are found at residues 294-387 (VPYP…GKDV), 390-471 (APSQ…EKDE), and 486-587 (PPQD…VPPA). 3 disordered regions span residues 580–664 (PDLL…VSTT), 694–714 (SAGPYANSDEEDGYASPEVKR), and 728–750 (LGQQPHCCHGDEYHTESSRGSDL). Pro residues predominate over residues 582–598 (LLVPPAPHPRTAPPPKP). Basic and acidic residues predominate over residues 603–616 (MDTKDLGPHVKVDE). A compositionally biased stretch (low complexity) spans 641 to 651 (GPGRRSPSPSR). Phosphoserine occurs at positions 701 and 709. Positions 735 to 746 (CHGDEYHTESSR) are enriched in basic and acidic residues. Phosphoserine occurs at positions 832 and 839. Phosphothreonine is present on T841. 2 SH3 domains span residues 848–916 (LPAR…EIHA) and 952–1019 (VPTR…EVPD). Residues 1024 to 1049 (HLSDAPPHYSHDPPMRTKAKRVSQPP) form a disordered region. Over residues 1040-1049 (TKAKRVSQPP) the composition is skewed to basic residues.

Belongs to the RIMBP family. As to quaternary structure, interacts with CACNA1D and CACNA1B, and potentially with other Ca(2+) channel alpha-1 isoforms. Interacts with RIMS1 and RIMS2.

The protein resides in the cell membrane. The protein localises to the synapse. In terms of biological role, plays a role in the synaptic transmission as bifunctional linker that interacts simultaneously with RIMS1, RIMS2, CACNA1D and CACNA1B. In Rattus norvegicus (Rat), this protein is RIMS-binding protein 2 (Rimbp2).